The following is a 305-amino-acid chain: Leucine-rich repeat-containing protein 25 (305 aa).

The first 20 residues, 1–20, serve as a signal peptide directing secretion; that stretch reads MGGTLAWTLLLPLLLRESDS. The Extracellular portion of the chain corresponds to 21–165; it reads LEPSCTVSSA…SCAPGLASAT (145 aa). 3 LRR repeats span residues 39 to 59, 62 to 83, and 86 to 107; these read SATCLNFSGLSLSLPHNQSLR, NVILLDLSGNGLRELPVTFFAH, and KLEVLNVLRNPLSRVDGALAAR. N44 and N55 each carry an N-linked (GlcNAc...) asparagine glycan. 2 N-linked (GlcNAc...) asparagine glycosylation sites follow: N130 and N148. Residues 166-186 traverse the membrane as a helical segment; the sequence is IGAVVVSGCLLLGLAIAGPVL. Over 187 to 305 the chain is Cytoplasmic; that stretch reads AWRLWRCRVA…DEEEYVIPGH (119 aa). The interval 204–229 is disordered; sequence PWAAQDGPKPGLGLQPRYGSRSAPKP. The residue at position 284 (Y284) is a Phosphotyrosine.

Interacts with RIGI. Interacts with SQSTM1. Interacts with p65/RELA; this interaction promotes the degradation of RELA through autophagy. In terms of tissue distribution, expressed in plasmacytoid dendritic cells (PDC), monocyte-derived dendritic cells (MDDC), granulocytes, monocytes, B-lymphocytes, peripheral blood leukocytes, spleen, bone marrow, and, to a lesser extent, lymph nodes, fetal liver, and appendix but not in thymus.

Its subcellular location is the membrane. It is found in the cytoplasm. Functionally, plays a role in the inhibition of RLR-mediated type I interferon signaling pathway by targeting RIGI for autophagic degradation. Interacts specifically with ISG15-associated RIGI to promote interaction between RIGI and the autophagic cargo receptor p62/SQSTM1 to mediate RIGI degradation via selective autophagy. Also plays a role in the inhibition of NF-kappa-B signaling pathway and inflammatory response by promoting the degradation of p65/RELA. The sequence is that of Leucine-rich repeat-containing protein 25 (LRRC25) from Homo sapiens (Human).